The sequence spans 357 residues: Tetraacyldisaccharide 4'-kinase (357 aa).

Residue 49–56 participates in ATP binding; that stretch reads TIGGTGKT.

This sequence belongs to the LpxK family.

It carries out the reaction a lipid A disaccharide + ATP = a lipid IVA + ADP + H(+). It participates in glycolipid biosynthesis; lipid IV(A) biosynthesis; lipid IV(A) from (3R)-3-hydroxytetradecanoyl-[acyl-carrier-protein] and UDP-N-acetyl-alpha-D-glucosamine: step 6/6. In terms of biological role, transfers the gamma-phosphate of ATP to the 4'-position of a tetraacyldisaccharide 1-phosphate intermediate (termed DS-1-P) to form tetraacyldisaccharide 1,4'-bis-phosphate (lipid IVA). The polypeptide is Tetraacyldisaccharide 4'-kinase (Porphyromonas gingivalis (strain ATCC BAA-308 / W83)).